Consider the following 398-residue polypeptide: Queuine tRNA-ribosyltransferase (398 aa).

Aspartate 102 acts as the Proton acceptor in catalysis. Residues 102–106 (DSGGF), aspartate 156, glutamine 205, and glycine 232 contribute to the substrate site. An RNA binding region spans residues 263-269 (GVGTPED). Aspartate 282 (nucleophile) is an active-site residue. Residues 287–291 (TRNAR) form an RNA binding; important for wobble base 34 recognition region. Residues cysteine 320, cysteine 322, cysteine 325, and histidine 362 each contribute to the Zn(2+) site.

This sequence belongs to the queuine tRNA-ribosyltransferase family. Homodimer. Within each dimer, one monomer is responsible for RNA recognition and catalysis, while the other monomer binds to the replacement base PreQ1. Zn(2+) serves as cofactor.

The catalysed reaction is 7-aminomethyl-7-carbaguanine + guanosine(34) in tRNA = 7-aminomethyl-7-carbaguanosine(34) in tRNA + guanine. Its pathway is tRNA modification; tRNA-queuosine biosynthesis. Its function is as follows. Catalyzes the base-exchange of a guanine (G) residue with the queuine precursor 7-aminomethyl-7-deazaguanine (PreQ1) at position 34 (anticodon wobble position) in tRNAs with GU(N) anticodons (tRNA-Asp, -Asn, -His and -Tyr). Catalysis occurs through a double-displacement mechanism. The nucleophile active site attacks the C1' of nucleotide 34 to detach the guanine base from the RNA, forming a covalent enzyme-RNA intermediate. The proton acceptor active site deprotonates the incoming PreQ1, allowing a nucleophilic attack on the C1' of the ribose to form the product. After dissociation, two additional enzymatic reactions on the tRNA convert PreQ1 to queuine (Q), resulting in the hypermodified nucleoside queuosine (7-(((4,5-cis-dihydroxy-2-cyclopenten-1-yl)amino)methyl)-7-deazaguanosine). This chain is Queuine tRNA-ribosyltransferase, found in Polaromonas sp. (strain JS666 / ATCC BAA-500).